Here is a 389-residue protein sequence, read N- to C-terminus: SH2 domain-containing protein 2A (389 aa).

Residues 41–63 (AASPQAPEAASNTGNAERAEEVP) form a disordered region. An SH2 domain is found at 95–186 (WFHGFITRRE…PYGETLTEPL (92 aa)). A disordered region spans residues 190 to 295 (TPEPAGLSLR…PIAFYAMGRG (106 aa)). Residues 203–216 (SNFGSKSQDPNPQY) are compositionally biased toward polar residues. Position 217 is a phosphoserine (Ser217). 2 consecutive short sequence motifs (SH3-binding) follow at residues 244–250 (RPKPPIP) and 272–278 (RPKPSNP). Over residues 245 to 256 (PKPPIPAKPQLP) the composition is skewed to pro residues. A Phosphoserine modification is found at Ser296. Residues 324-389 (KSWSRPVPGG…QAWLPLGPPQ (66 aa)) form a disordered region. Polar residues predominate over residues 337-348 (GGSQLHSENSVI). Residues 352-361 (PPLPHQPPPA) are compositionally biased toward pro residues.

In terms of assembly, interacts with KDR. Interacts with TXK and ITK. In terms of processing, phosphorylated on tyrosine residues. As to expression, expression limited to tissues of the immune system and, in particular, activated T-cells. Expressed in peripheral blood leukocytes, thymus and spleen. Much lower expression or undetectable, in brain, placenta, skeletal muscle, prostate, testis, ovary, small intestine, and colon. Expressed at low levels in unstimulated T-cells, but not expressed in normal resting or activated B-cells. According to PubMed:10692392, expression is not restricted to activated T-cells, but strongly expressed in blood cell lineages, the endothelium and other cell and tissue types, such as heart, lung, and liver.

The protein localises to the cytoplasm. Its function is as follows. Could be a T-cell-specific adapter protein involved in the control of T-cell activation. May play a role in the CD4-p56-LCK-dependent signal transduction pathway. Could also play an important role in normal and pathological angiogenesis. Could be an adapter protein that facilitates and regulates interaction of KDR with effector proteins important to endothelial cell survival and proliferation. The chain is SH2 domain-containing protein 2A (SH2D2A) from Homo sapiens (Human).